A 306-amino-acid polypeptide reads, in one-letter code: MTTDWAEIACEVPAEMVDTLADFLVELTGNGVGIDNLHLDTFSLDTLEDTPLKSVKGYLPLDDSLEEMRIRIEQFLAQTGPSFPGYVYAPPVVTVIRNEDWANNWKVHFKPVRIGRRLVIKPTWEEYLKQEGDLVIQIDPGMAFGTGAHPTTKMCLEALERIGFYAHGGKLPSPVLDVGTGSGVLSIAAALLGAEEIVAVDIDPEAVRVTVENLELNGMADRVAPSTTSLEQLPGGFQVVVANILAEELVRLAGELTARVAPGGWLILSGILTEKEAFVCAAFSSLELVENPKELEWSCLSFRKPL.

S-adenosyl-L-methionine-binding residues include Thr-152, Gly-179, Asp-201, and Asn-243.

Belongs to the methyltransferase superfamily. PrmA family.

It is found in the cytoplasm. It catalyses the reaction L-lysyl-[protein] + 3 S-adenosyl-L-methionine = N(6),N(6),N(6)-trimethyl-L-lysyl-[protein] + 3 S-adenosyl-L-homocysteine + 3 H(+). In terms of biological role, methylates ribosomal protein L11. The sequence is that of Ribosomal protein L11 methyltransferase from Geobacter sp. (strain M21).